Consider the following 331-residue polypeptide: CRISPR-associated endonuclease Cas1 (331 aa).

Residues Glu-166, His-228, and Asp-243 each coordinate Mn(2+).

It belongs to the CRISPR-associated endonuclease Cas1 family. In terms of assembly, homodimer, forms a heterotetramer with a Cas2 homodimer. Mg(2+) is required as a cofactor. The cofactor is Mn(2+).

Functionally, CRISPR (clustered regularly interspaced short palindromic repeat), is an adaptive immune system that provides protection against mobile genetic elements (viruses, transposable elements and conjugative plasmids). CRISPR clusters contain spacers, sequences complementary to antecedent mobile elements, and target invading nucleic acids. CRISPR clusters are transcribed and processed into CRISPR RNA (crRNA). Acts as a dsDNA endonuclease. Involved in the integration of spacer DNA into the CRISPR cassette. This is CRISPR-associated endonuclease Cas1 from Hyperthermus butylicus (strain DSM 5456 / JCM 9403 / PLM1-5).